A 76-amino-acid polypeptide reads, in one-letter code: MKKDIHPDYHTIKVEMTDGTQFETRSTWGKEGEVLKLEIDPKSHAAWTGGKQKLMDKGRVSKFNKKFQNFRSEKKD.

Belongs to the bacterial ribosomal protein bL31 family. Type A subfamily. Part of the 50S ribosomal subunit.

In terms of biological role, binds the 23S rRNA. This chain is Large ribosomal subunit protein bL31 (rpmE), found in Pelagibacter ubique (strain HTCC1062).